Reading from the N-terminus, the 338-residue chain is Taste receptor type 2 member 39 (338 aa).

At 1-30 (MLGRCFPPNTKEKQQLRMIKLCDPAESELS) the chain is on the extracellular side. The helical transmembrane segment at 31-51 (PFLITLTLAVLLAEYLTGIIA) threads the bilayer. Residues 52-74 (NGFITAIHAAEWVQNKSVSTSGR) lie on the Cytoplasmic side of the membrane. The helical transmembrane segment at 75–95 (ILVFLSVSRIALQSLMMLEIT) threads the bilayer. Residues 96–116 (ISSTSLSFYSEDAVYYAFKIS) are Extracellular-facing. A helical transmembrane segment spans residues 117 to 137 (FIFLNFCSLWFAAWLSFFYFV). The Cytoplasmic segment spans residues 138–156 (KIANFSYPLFLKLRWRISG). A helical membrane pass occupies residues 157-177 (LIPWLLWLSVFISFSHSMFCI). Residues 178 to 205 (NICTGYCDNSFPIHSSNSTEKTYFSEIS) lie on the Extracellular side of the membrane. A glycan (N-linked (GlcNAc...) asparagine) is linked at Asn-194. The helical transmembrane segment at 206 to 226 (VVSLAFFFNLGIVIPLIMFIL) threads the bilayer. Residues 227–262 (AAILLILSLKRHTLHMGSNATGSKDPSMEAHIGAIK) are Cytoplasmic-facing. A helical transmembrane segment spans residues 263–283 (ATSYFLILYIFNAVALFIYLS). The Extracellular portion of the chain corresponds to 284–291 (NMFDINSL). Residues 292 to 312 (WNTLCQIIMAAYPASHSILLI) traverse the membrane as a helical segment. The Cytoplasmic portion of the chain corresponds to 313–338 (KDNPGLRRAWKQLQHRLHLYPKQWTL).

It belongs to the G-protein coupled receptor T2R family.

The protein resides in the membrane. In terms of biological role, receptor that may play a role in the perception of bitterness and is gustducin-linked. May play a role in sensing the chemical composition of the gastrointestinal content. The activity of this receptor may stimulate alpha gustducin, mediate PLC-beta-2 activation and lead to the gating of TRPM5. The protein is Taste receptor type 2 member 39 (TAS2R39) of Macaca mulatta (Rhesus macaque).